A 493-amino-acid polypeptide reads, in one-letter code: 1-aminocyclopropane-1-carboxylate synthase 1 (493 aa).

At K279 the chain carries N6-(pyridoxal phosphate)lysine.

This sequence belongs to the class-I pyridoxal-phosphate-dependent aminotransferase family. Homodimer. The cofactor is pyridoxal 5'-phosphate.

It carries out the reaction S-adenosyl-L-methionine = 1-aminocyclopropane-1-carboxylate + S-methyl-5'-thioadenosine + H(+). The protein operates within alkene biosynthesis; ethylene biosynthesis via S-adenosyl-L-methionine; ethylene from S-adenosyl-L-methionine: step 1/2. Its function is as follows. Catalyzes the formation of 1-aminocyclopropane-1-carboxylate, a direct precursor of ethylene in higher plants. The sequence is that of 1-aminocyclopropane-1-carboxylate synthase 1 (ACC1A) from Cucurbita pepo (Vegetable marrow).